A 639-amino-acid polypeptide reads, in one-letter code: NADP-dependent malic enzyme, chloroplastic (639 aa).

A chloroplast-targeting transit peptide spans 1 to 49 (MLSARAAATAAAAAASPLWKRGEGGSSGSGSGCTSCREVRRRAAAVRVR). The disordered stretch occupies residues 15-34 (ASPLWKRGEGGSSGSGSGCT). The active-site Proton donor is the Tyr-187. Residue Arg-240 coordinates NAD(+). The Proton acceptor role is filled by Lys-258. Glu-330, Asp-331, and Asp-354 together coordinate a divalent metal cation. Asp-354 lines the NAD(+) pocket. 383–399 (LFLGAGEAGTGIAELIA) contacts NADP(+). Asn-495 contacts NAD(+).

It belongs to the malic enzymes family. As to quaternary structure, homotetramer. The cofactor is Mg(2+). Mn(2+) is required as a cofactor.

It is found in the plastid. It localises to the chloroplast. It catalyses the reaction (S)-malate + NADP(+) = pyruvate + CO2 + NADPH. It carries out the reaction oxaloacetate + H(+) = pyruvate + CO2. It functions in the pathway photosynthesis; C4 acid pathway. The chloroplastic ME isoform decarboxylates malate shuttled from neighboring mesophyll cells. The CO(2) released is then refixed by ribulose-bisphosphate carboxylase. This pathway eliminates the photorespiratory loss of CO(2) that occurs in most plants. The polypeptide is NADP-dependent malic enzyme, chloroplastic (ME6) (Oryza sativa subsp. japonica (Rice)).